Reading from the N-terminus, the 230-residue chain is 5'-methylthioadenosine/S-adenosylhomocysteine nucleosidase (230 aa).

The Proton acceptor role is filled by glutamate 12. Residues glycine 78, valine 152, and methionine 173–glutamate 174 each bind substrate. The active-site Proton donor is the aspartate 197.

This sequence belongs to the PNP/UDP phosphorylase family. MtnN subfamily.

It catalyses the reaction S-adenosyl-L-homocysteine + H2O = S-(5-deoxy-D-ribos-5-yl)-L-homocysteine + adenine. It carries out the reaction S-methyl-5'-thioadenosine + H2O = 5-(methylsulfanyl)-D-ribose + adenine. The enzyme catalyses 5'-deoxyadenosine + H2O = 5-deoxy-D-ribose + adenine. Its pathway is amino-acid biosynthesis; L-methionine biosynthesis via salvage pathway; S-methyl-5-thio-alpha-D-ribose 1-phosphate from S-methyl-5'-thioadenosine (hydrolase route): step 1/2. Catalyzes the irreversible cleavage of the glycosidic bond in both 5'-methylthioadenosine (MTA) and S-adenosylhomocysteine (SAH/AdoHcy) to adenine and the corresponding thioribose, 5'-methylthioribose and S-ribosylhomocysteine, respectively. Also cleaves 5'-deoxyadenosine, a toxic by-product of radical S-adenosylmethionine (SAM) enzymes, into 5-deoxyribose and adenine. The polypeptide is 5'-methylthioadenosine/S-adenosylhomocysteine nucleosidase (Glaesserella parasuis serovar 5 (strain SH0165) (Haemophilus parasuis)).